A 487-amino-acid polypeptide reads, in one-letter code: E3 ubiquitin-protein ligase RNF8 (487 aa).

The FHA domain maps to 38 to 92 (VTVGRGFGVTYQLVSKICPLMISRNHCILKQNAEGQWTIKDNKSLNGVWLNRERL). The segment at 68–72 (QNAEG) is required for interaction with PIWIL1. 2 disordered regions span residues 143-176 (MMEKNKGLRTKRKFSLDELEGSGAEGPSNLKSKI) and 182-201 (EPGQQVKSHGKGKVASQPSE). Serine 157 is modified (phosphoserine). An RING-type zinc finger spans residues 405–443 (CIICSEYFVEAVTLNCAHSFCSYCINEWMKRKVECPICR).

It belongs to the RNF8 family. As to quaternary structure, homodimer. Forms a E2-E3 ubiquitin ligase complex composed of the RNF8 homodimer and a E2 heterodimer of UBE2N and UBE2V2. Interacts with class III E2s, including UBE2E1, UBE2E2, and UBE2E3 and with UBE2N. Interacts with RXRA. Interacts (via FHA domain) with phosphorylated HERC2 (via C-terminus). Interacts with PIWIL1; leading to sequester RNF8 in the cytoplasm. Interacts with WRAP53/TCAB1. Post-translationally, autoubiquitinated through 'Lys-48' and 'Lys-63' of ubiquitin. 'Lys-63' polyubiquitination is mediated by UBE2N. 'Lys-29'-type polyubiquitination is also observed, but it doesn't require its own functional RING-type zinc finger.

It is found in the nucleus. It localises to the cytoplasm. The protein resides in the midbody. Its subcellular location is the chromosome. The protein localises to the telomere. It carries out the reaction S-ubiquitinyl-[E2 ubiquitin-conjugating enzyme]-L-cysteine + [acceptor protein]-L-lysine = [E2 ubiquitin-conjugating enzyme]-L-cysteine + N(6)-ubiquitinyl-[acceptor protein]-L-lysine.. It functions in the pathway protein modification; protein ubiquitination. Its function is as follows. E3 ubiquitin-protein ligase that plays a key role in DNA damage signaling via 2 distinct roles: by mediating the 'Lys-63'-linked ubiquitination of histones H2A and H2AX and promoting the recruitment of DNA repair proteins at double-strand breaks (DSBs) sites, and by catalyzing 'Lys-48'-linked ubiquitination to remove target proteins from DNA damage sites. Following DNA DSBs, it is recruited to the sites of damage by ATM-phosphorylated MDC1 and catalyzes the 'Lys-63'-linked ubiquitination of histones H2A and H2AX, thereby promoting the formation of TP53BP1 and BRCA1 ionizing radiation-induced foci (IRIF). Also controls the recruitment of UIMC1-BRCC3 (RAP80-BRCC36) and PAXIP1/PTIP to DNA damage sites. Promotes the recruitment of NBN to DNA damage sites by catalyzing 'Lys-6'-linked ubiquitination of NBN. Also recruited at DNA interstrand cross-links (ICLs) sites and catalyzes 'Lys-63'-linked ubiquitination of histones H2A and H2AX, leading to recruitment of FAAP20 and Fanconi anemia (FA) complex, followed by interstrand cross-link repair. H2A ubiquitination also mediates the ATM-dependent transcriptional silencing at regions flanking DSBs in cis, a mechanism to avoid collision between transcription and repair intermediates. Promotes the formation of 'Lys-63'-linked polyubiquitin chains via interactions with the specific ubiquitin-conjugating UBE2N/UBC13 and ubiquitinates non-histone substrates such as PCNA. Substrates that are polyubiquitinated at 'Lys-63' are usually not targeted for degradation. Also catalyzes the formation of 'Lys-48'-linked polyubiquitin chains via interaction with the ubiquitin-conjugating UBE2L6/UBCH8, leading to degradation of substrate proteins such as CHEK2, JMJD2A/KDM4A and KU80/XRCC5: it is still unclear how the preference toward 'Lys-48'- versus 'Lys-63'-linked ubiquitination is regulated but it could be due to RNF8 ability to interact with specific E2 specific ligases. For instance, interaction with phosphorylated HERC2 promotes the association between RNF8 and UBE2N/UBC13 and favors the specific formation of 'Lys-63'-linked ubiquitin chains. Promotes non-homologous end joining (NHEJ) by promoting the 'Lys-48'-linked ubiquitination and degradation the of KU80/XRCC5. Following DNA damage, mediates the ubiquitination and degradation of JMJD2A/KDM4A in collaboration with RNF168, leading to unmask H4K20me2 mark and promote the recruitment of TP53BP1 at DNA damage sites. Following DNA damage, mediates the ubiquitination and degradation of POLD4/p12, a subunit of DNA polymerase delta. In the absence of POLD4, DNA polymerase delta complex exhibits higher proofreading activity. In addition to its function in damage signaling, also plays a role in higher-order chromatin structure by mediating extensive chromatin decondensation. Involved in the activation of ATM by promoting histone H2B ubiquitination, which indirectly triggers histone H4 'Lys-16' acetylation (H4K16ac), establishing a chromatin environment that promotes efficient activation of ATM kinase. Required in the testis, where it plays a role in the replacement of histones during spermatogenesis. At uncapped telomeres, promotes the joining of deprotected chromosome ends by inducing H2A ubiquitination and TP53BP1 recruitment, suggesting that it may enhance cancer development by aggravating telomere-induced genome instability in case of telomeric crisis. Promotes the assembly of RAD51 at DNA DSBs in the absence of BRCA1 and TP53BP1 Also involved in class switch recombination in immune system, via its role in regulation of DSBs repair. May be required for proper exit from mitosis after spindle checkpoint activation and may regulate cytokinesis. May play a role in the regulation of RXRA-mediated transcriptional activity. Not involved in RXRA ubiquitination by UBE2E2. The chain is E3 ubiquitin-protein ligase RNF8 from Bos taurus (Bovine).